Here is a 206-residue protein sequence, read N- to C-terminus: Small ribosomal subunit protein uS4 (206 aa).

An S4 RNA-binding domain is found at 96–156; the sequence is QRLDNVVYRM…EKSKTQARII (61 aa).

Belongs to the universal ribosomal protein uS4 family. In terms of assembly, part of the 30S ribosomal subunit. Contacts protein S5. The interaction surface between S4 and S5 is involved in control of translational fidelity.

In terms of biological role, one of the primary rRNA binding proteins, it binds directly to 16S rRNA where it nucleates assembly of the body of the 30S subunit. Functionally, with S5 and S12 plays an important role in translational accuracy. This chain is Small ribosomal subunit protein uS4, found in Pseudoalteromonas translucida (strain TAC 125).